The primary structure comprises 191 residues: Protein YceI (191 aa).

The signal sequence occupies residues 1–22 (MKKNLLGFTFASLLFTTGSAVA).

Belongs to the UPF0312 family. Type 1 subfamily.

The protein localises to the periplasm. This is Protein YceI from Salmonella agona (strain SL483).